Reading from the N-terminus, the 398-residue chain is Meiotically up-regulated gene 126 protein (398 aa).

Disordered stretches follow at residues glutamate 30 to arginine 81 and phenylalanine 119 to serine 260. 2 stretches are compositionally biased toward polar residues: residues phenylalanine 119–threonine 135 and valine 183–glutamine 199. Low complexity predominate over residues glutamine 210–glutamate 222. A compositionally biased stretch (basic and acidic residues) spans serine 224–lysine 236. The span at arginine 248–serine 260 shows a compositional bias: polar residues. The next 4 membrane-spanning stretches (helical) occupy residues isoleucine 269–glutamate 289, isoleucine 305–leucine 325, glycine 341–isoleucine 361, and leucine 373–tyrosine 393.

The protein resides in the membrane. Has a role in meiosis. This chain is Meiotically up-regulated gene 126 protein (mug126), found in Schizosaccharomyces pombe (strain 972 / ATCC 24843) (Fission yeast).